A 345-amino-acid polypeptide reads, in one-letter code: Protein RecA (345 aa).

80-87 (GPESSGKT) is an ATP binding site.

Belongs to the RecA family.

It is found in the cytoplasm. Its function is as follows. Can catalyze the hydrolysis of ATP in the presence of single-stranded DNA, the ATP-dependent uptake of single-stranded DNA by duplex DNA, and the ATP-dependent hybridization of homologous single-stranded DNAs. It interacts with LexA causing its activation and leading to its autocatalytic cleavage. The protein is Protein RecA of Mycoplasma mycoides subsp. mycoides SC (strain CCUG 32753 / NCTC 10114 / PG1).